The chain runs to 1050 residues: Inositol hexakisphosphate kinase 1 (1050 aa).

Disordered stretches follow at residues 87-117 (KITR…LSSS), 129-177 (PAIK…IQNV), 269-319 (RQEN…DNEH), and 396-423 (SDLD…NNND). The residue at position 150 (Ser150) is a Phosphoserine. The segment covering 156-173 (KQQSHQPQVLHHQTSLKP) has biased composition (polar residues). Residues 290–306 (ESIKEKPNTFEQDKEGE) show a composition bias toward basic and acidic residues. Acidic residues predominate over residues 307 to 316 (QADEEEDEGD). Ser396 bears the Phosphoserine mark. The segment covering 402–417 (NNGKNDTSNENKDIEV) has biased composition (basic and acidic residues). At Ser469 the chain carries Phosphoserine. The span at 508-522 (NDSYFSSSSSHNSCS) shows a compositional bias: low complexity. Disordered regions lie at residues 508–539 (NDSY…DSGS) and 562–625 (RKRN…PNLQ). Phosphoserine is present on residues Ser537, Ser539, Ser566, Ser583, Ser589, Ser646, Ser664, and Ser670. Residues 566–624 (SNTTTMGNHNARLGSSPSFLTQKSRASSHDASNTSMKTLGDSSSQASLQMDDSKVNPNL) are compositionally biased toward polar residues. Position 772–780 (772–780 (PCALDLKMG)) interacts with substrate.

Belongs to the inositol phosphokinase (IPK) family.

Its subcellular location is the cytoplasm. The enzyme catalyses 1D-myo-inositol hexakisphosphate + ATP = 5-diphospho-1D-myo-inositol 1,2,3,4,6-pentakisphosphate + ADP. It carries out the reaction 1-diphospho-1D-myo-inositol 2,3,4,5,6-pentakisphosphate + ATP + H(+) = 1,5-bis(diphospho)-1D-myo-inositol 2,3,4,6-tetrakisphosphate + ADP. Its function is as follows. Converts inositol hexakisphosphate (InsP6) to diphosphoinositol pentakisphosphate (InsP7/PP-InsP5). Involved in phosphate regulation and polyphosphate accumulation. Required for resistance to salt stress, cell wall integrity, vacuole morphogenesis, and telomere maintenance. This Saccharomyces cerevisiae (strain ATCC 204508 / S288c) (Baker's yeast) protein is Inositol hexakisphosphate kinase 1 (KCS1).